Here is a 479-residue protein sequence, read N- to C-terminus: Cysteine--tRNA ligase (479 aa).

Position 28 (Cys-28) interacts with Zn(2+). Residues 30–40 carry the 'HIGH' region motif; sequence PTVYDHAHLGH. Zn(2+)-binding residues include Cys-207, His-232, and Glu-236. Residues 264 to 268 carry the 'KMSKS' region motif; that stretch reads KMSKS. Position 267 (Lys-267) interacts with ATP.

Belongs to the class-I aminoacyl-tRNA synthetase family. Requires Zn(2+) as cofactor.

The protein localises to the cytoplasm. It catalyses the reaction tRNA(Cys) + L-cysteine + ATP = L-cysteinyl-tRNA(Cys) + AMP + diphosphate. In Methanococcus aeolicus (strain ATCC BAA-1280 / DSM 17508 / OCM 812 / Nankai-3), this protein is Cysteine--tRNA ligase.